The sequence spans 140 residues: MPTINQLVRKGREKKVVKSKSPALNKGYNSFKKIQTNVSSPQKRGVCTRVGTMTPKKPNSALRKYARVRLTNGIEVTAYIPGIGHNLQEHSVVLIRGGRVKDLPGVRYHIIRGALDTAGVANRMQGRSKYGAKKPKESKK.

Residue D102 is modified to 3-methylthioaspartic acid.

It belongs to the universal ribosomal protein uS12 family. As to quaternary structure, part of the 30S ribosomal subunit. Contacts proteins S8 and S17. May interact with IF1 in the 30S initiation complex.

In terms of biological role, with S4 and S5 plays an important role in translational accuracy. Functionally, interacts with and stabilizes bases of the 16S rRNA that are involved in tRNA selection in the A site and with the mRNA backbone. Located at the interface of the 30S and 50S subunits, it traverses the body of the 30S subunit contacting proteins on the other side and probably holding the rRNA structure together. The combined cluster of proteins S8, S12 and S17 appears to hold together the shoulder and platform of the 30S subunit. This chain is Small ribosomal subunit protein uS12, found in Geobacillus sp. (strain WCH70).